We begin with the raw amino-acid sequence, 342 residues long: 11-beta-hydroxysteroid dehydrogenase-like 6 (342 aa).

Residues 10 to 30 (FLFPLLTLYALLVFYPTYQRL) traverse the membrane as a helical; Signal-anchor for type II membrane protein segment. NADP(+) is bound by residues 54-80 (GAAS…VDIR) and Asp105. Ser184 lines the substrate pocket. The Proton acceptor role is filled by Tyr197. Residues 197–201 (YCASK) and Lys201 each bind NADP(+).

Belongs to the short-chain dehydrogenases/reductases (SDR) family.

It is found in the membrane. This chain is 11-beta-hydroxysteroid dehydrogenase-like 6 (HSD6), found in Arabidopsis thaliana (Mouse-ear cress).